A 209-amino-acid polypeptide reads, in one-letter code: Uracil phosphoribosyltransferase (209 aa).

5-phospho-alpha-D-ribose 1-diphosphate is bound by residues arginine 79, arginine 104, and 131 to 139; that span reads DPMLATGGT. Uracil contacts are provided by residues isoleucine 194 and 199–201; that span reads GDA. Aspartate 200 lines the 5-phospho-alpha-D-ribose 1-diphosphate pocket.

This sequence belongs to the UPRTase family. Mg(2+) serves as cofactor.

The enzyme catalyses UMP + diphosphate = 5-phospho-alpha-D-ribose 1-diphosphate + uracil. The protein operates within pyrimidine metabolism; UMP biosynthesis via salvage pathway; UMP from uracil: step 1/1. With respect to regulation, allosterically activated by GTP. In terms of biological role, catalyzes the conversion of uracil and 5-phospho-alpha-D-ribose 1-diphosphate (PRPP) to UMP and diphosphate. This chain is Uracil phosphoribosyltransferase, found in Pseudoalteromonas translucida (strain TAC 125).